A 612-amino-acid chain; its full sequence is Polyadenylation factor subunit 2 (612 aa).

Residues 1 to 21 (MAYEPRGDHGGGGGGQGQDGA) are disordered. WD repeat units lie at residues 93-132 (KIKH…FETI), 135-175 (AHDS…QSIN), 177-215 (HTDP…MESK), 218-257 (GHGW…CLTT), 260-300 (GHKS…DICL), 303-345 (GHEK…PGQS), and 373-412 (AHDY…DAEV). 3 disordered regions span residues 424 to 450 (AEAQ…MEDE), 486 to 514 (PPPP…GSLP), and 544 to 612 (PPPG…TRAR). A compositionally biased stretch (basic and acidic residues) spans 430–442 (WDRRGGRRQRQEE). 2 stretches are compositionally biased toward pro residues: residues 486–506 (PPPP…PFPL) and 544–575 (PPPG…PPPM).

The protein localises to the nucleus. Its function is as follows. Required for 3'-end cleavage and polyadenylation of pre-mRNAs. Also involved in chromosome segregation where it has a role in chromosome attachment to the mitotic spindle. The protein is Polyadenylation factor subunit 2 (PFS2) of Gibberella zeae (strain ATCC MYA-4620 / CBS 123657 / FGSC 9075 / NRRL 31084 / PH-1) (Wheat head blight fungus).